The sequence spans 345 residues: GTPase Obg (345 aa).

One can recognise an Obg domain in the interval 1–158 (MFIDSVKITL…RLVRLELKLI (158 aa)). The region spanning 159–339 (ADVGLVGFPN…LKFMLLEEIK (181 aa)) is the OBG-type G domain. GTP-binding positions include 165 to 172 (GFPNVGKS), 190 to 194 (FTTLT), 212 to 215 (DIPG), 280 to 283 (SKSD), and 320 to 322 (SSL). The Mg(2+) site is built by S172 and T192.

Belongs to the TRAFAC class OBG-HflX-like GTPase superfamily. OBG GTPase family. As to quaternary structure, monomer. It depends on Mg(2+) as a cofactor.

The protein localises to the cytoplasm. In terms of biological role, an essential GTPase which binds GTP, GDP and possibly (p)ppGpp with moderate affinity, with high nucleotide exchange rates and a fairly low GTP hydrolysis rate. Plays a role in control of the cell cycle, stress response, ribosome biogenesis and in those bacteria that undergo differentiation, in morphogenesis control. The chain is GTPase Obg from Campylobacter jejuni subsp. jejuni serotype O:6 (strain 81116 / NCTC 11828).